The sequence spans 4074 residues: Fibrocystin (4074 aa).

Residues 1–22 (MIVWLISLMSIEILLLAGPALS) form the signal peptide. Residues Asn-54 and Asn-224 are each glycosylated (N-linked (GlcNAc...) asparagine). The 53-residue stretch at 258-310 (EILSVFPETGSLGGKTDIIITGDFFDNPALVTIAGVPCDIRHMSPRKIECTTR) folds into the IPT/TIG 1 domain. A PA14 domain is found at 323-483 (AGNRGLLFEV…TWLNPDVVST (161 aa)). Asn-355, Asn-385, Asn-518, Asn-527, Asn-640, Asn-710, Asn-741, Asn-822, Asn-829, Asn-868, Asn-953, Asn-966, Asn-976, Asn-1006, Asn-1059, Asn-1083, Asn-1115, Asn-1134, Asn-1233, Asn-1240, Asn-1274, Asn-1284, Asn-1308, Asn-1319, Asn-1342, Asn-1373, Asn-1445, Asn-1456, Asn-1471, Asn-1490, Asn-1528, Asn-1560, Asn-1578, Asn-1598, Asn-1627, Asn-1694, Asn-1760, Asn-1775, Asn-1789, Asn-1875, Asn-1915, Asn-1941, Asn-1955, Asn-2030, Asn-2111, and Asn-2140 each carry an N-linked (GlcNAc...) asparagine glycan. The IPT/TIG 2 domain maps to 944–1000 (SLLIYIFGINFSGDPQALEIMVNKTNCKVIFSNQTNVICQTDLLPVGMHRLFMVVRP). IPT/TIG domains are found at residues 1018-1101 (PRLD…AFTY), 1107-1186 (PVIT…RSPG), and 1199-1274 (SIEP…WAGN). One can recognise an IPT/TIG 6 domain in the interval 1385 to 1464 (PWIMAISPTH…LNVTVIVNGL (80 aa)). Residues 1573 to 1641 (HYFPKNFSIH…LVIEVDGLSY (69 aa)) form the IPT/TIG 7 domain. In terms of domain architecture, G8 1 spans 1928-2049 (HSWFPERVPQ…PEVTFTHLQA (122 aa)). 5 PbH1 repeats span residues 2245–2267 (TLGLKVDSNIFYNILGHALLVGT), 2288–2322 (EQGNIIRNNVIISISGTEGLSSPEMLTPSGIYILN), 2351–2373 (APLLSFTQNIAHSCTRYGLFIYP), 2383–2404 (RGPTLFQNFTVWGSAGGARISR), and 2405–2427 (SSNLHLKNFQVYSCRDFGIDILE). Asn-2390 carries an N-linked (GlcNAc...) asparagine glycan. Residues Asn-2431, Asn-2467, Asn-2531, Asn-2549, Asn-2579, Asn-2591, Asn-2749, Asn-2764, Asn-2972, and Asn-3004 are each glycosylated (N-linked (GlcNAc...) asparagine). Residues 2460–2483 (RWELIISNTTFVNFDLTDCVSIRT) form a PbH1 6 repeat. Positions 2743 to 2869 (EGWGGHNHTI…PKKSWTRLAA (127 aa)) constitute a G8 2 domain. A PbH1 7 repeat occupies 3029 to 3051 (SHGIILNDNIVFGTVGHGIDLEG). Asn-3053 carries N-linked (GlcNAc...) asparagine glycosylation. One copy of the PbH1 8 repeat lies at 3082–3104 (AKDINLYGNVVAGSERIGFHIQG). Residues Asn-3136, Asn-3165, Asn-3221, Asn-3484, Asn-3702, Asn-3721, and Asn-3833 are each glycosylated (N-linked (GlcNAc...) asparagine). The stretch at 3158–3183 (ENSVEIENITLVDNSIGLLATVYVSS) is one PbH1 9 repeat. Residues 3854 to 3874 (IILAVSLCSVASWLALCCLVC) form a helical membrane-spanning segment. Residues 3871–3888 (CLVCCWFRKSKSRKIKSE) form a ciliary targeting sequence (CST) region. 3 disordered regions span residues 3896-3919 (NDQKSHIHMSSKHPRSQETKKEDT), 3943-3965 (NGVSRRKVSRRAVREEGSSREED), and 4031-4074 (LQGQ…QEQL). 2 stretches are compositionally biased toward basic and acidic residues: residues 3910-3919 (RSQETKKEDT) and 3954-3965 (AVREEGSSREED). The segment at 3947–3976 (RRKVSRRAVREEGSSREEDVVPAPRIISIT) is nuclear localization signal (NLS).

As to quaternary structure, interacts with CAMLG. Interacts with PKD2. Interacts (via CST) with ARF4; this interaction allows an efficient PKHD1 trafficking to the cilium. Interacts (via CST) with RAB8A; this interaction controls trafficking through the endomembrane systeme and to the cilium. Interacts (via CST) with TULP3; this interaction allows PKHD1 trafficking to the cilium. Palmitoylated. Palmitoylation facilitates the trafficking to the cilia and membrane targeting. In terms of processing, N-glycosylated. Post-translationally, several proteolytic cleavages occur within the extracellular domain, whereas at least one cleavage occurs within the cytoplasmic domain. Cleaved by a probable proprotein convertase which produces an extracellular domain (polyductin extracellular domain, (PECD)) and a C-terminal fragment (polyductin transmembrane fragment (PTM)) which are tethered together by disulfide bonds. This extracellular domain (PECD) is then shed from the primary cilium by activation of a member of the ADAM metalloproteinase disintegrins family, resulting in concomitant release of an intra-cellular C-terminal fragment (ICD) via a gamma-secretase-dependent process. The proteolytic cleavage of the C-terminal intracellular fragment (ICD) is controlled by cytosolic calcium concentration and activation of PKC.

The protein resides in the cell membrane. Its subcellular location is the cytoplasm. It is found in the apical cell membrane. It localises to the cytoskeleton. The protein localises to the cilium basal body. The protein resides in the cell projection. Its subcellular location is the cilium. It is found in the spindle. It localises to the chromosome. The protein localises to the centromere. The protein resides in the nucleus. Its subcellular location is the secreted. It is found in the extracellular exosome. It localises to the endoplasmic reticulum. The protein localises to the golgi apparatus. In terms of biological role, promotes ciliogenesis in renal epithelial cells and therefore participates in the tubules formation and/ or ensures the maintenance of the architecture of the lumen of the kidney. Has an impact on cellular symmetry by ensuring correct bipolar cell division through the regulation of centrosome duplication and mitotic spindle assembly and by maintaining oriented cell division (OCD) during tubular elongation through planar cell polarity (PCP) pathway. During epithelial cell morphogenesis, it also regulates cell-cell and cell-matrix adhesion and participates in cell motility. Promotes cell-cell contact through the positive regulation of PTK2 kinase activity leading to either positive regulation of epithelial cell proliferation through the HRAS/RAF1 pathways, or negative regulation of apoptosis through the PDK1/AKT1 pathway. May act in collecting-duct and biliary differentiation. May participate in the regulation of the cholangiocytes proliferation and the CCN2 production in an CXCL8-dependent manner. This Canis lupus familiaris (Dog) protein is Fibrocystin.